We begin with the raw amino-acid sequence, 201 residues long: Urease accessory protein UreG (201 aa).

12 to 19 (GPVGSGKT) is a GTP binding site.

The protein belongs to the SIMIBI class G3E GTPase family. UreG subfamily. Homodimer. UreD, UreF and UreG form a complex that acts as a GTP-hydrolysis-dependent molecular chaperone, activating the urease apoprotein by helping to assemble the nickel containing metallocenter of UreC. The UreE protein probably delivers the nickel.

The protein localises to the cytoplasm. Facilitates the functional incorporation of the urease nickel metallocenter. This process requires GTP hydrolysis, probably effectuated by UreG. The chain is Urease accessory protein UreG from Dechloromonas aromatica (strain RCB).